The chain runs to 299 residues: Tyrosine recombinase XerC (299 aa).

Positions 1–85 constitute a Core-binding (CB) domain; that stretch reads MKRQLEAYCA…AVRGLYRYLN (85 aa). A Tyr recombinase domain is found at 106 to 285; it reads RLPKVLDTDR…DFQHLAAVYD (180 aa). Residues R146, K170, H237, R240, and H263 contribute to the active site. Y272 functions as the O-(3'-phospho-DNA)-tyrosine intermediate in the catalytic mechanism.

This sequence belongs to the 'phage' integrase family. XerC subfamily. As to quaternary structure, forms a cyclic heterotetrameric complex composed of two molecules of XerC and two molecules of XerD.

It is found in the cytoplasm. In terms of biological role, site-specific tyrosine recombinase, which acts by catalyzing the cutting and rejoining of the recombining DNA molecules. The XerC-XerD complex is essential to convert dimers of the bacterial chromosome into monomers to permit their segregation at cell division. It also contributes to the segregational stability of plasmids. This chain is Tyrosine recombinase XerC, found in Pseudomonas putida (strain ATCC 700007 / DSM 6899 / JCM 31910 / BCRC 17059 / LMG 24140 / F1).